The sequence spans 67 residues: Pepsin B (67 aa).

The propeptide at 1-43 (MERIILRKGKSIREAMEEQGVLEKFLKNRPKIDPAAKYHFNND) is activation peptide.

It belongs to the peptidase A1 family.

Its subcellular location is the secreted. It carries out the reaction Degradation of gelatin, little activity on hemoglobin. Specificity on B chain of insulin more restricted than that of pepsin A. Does not cleave 1-Phe-|-Val-2, 4-Gln-|-His-5 or 23-Gly-|-Phe-24.. The sequence is that of Pepsin B (PGB) from Sus scrofa (Pig).